The primary structure comprises 173 residues: Ribosome maturation factor RimM (173 aa).

Residues 98 to 170 (VGDMTWDSFI…SLTVSLPEGL (73 aa)) enclose the PRC barrel domain.

Belongs to the RimM family. As to quaternary structure, binds ribosomal protein uS19.

The protein localises to the cytoplasm. Functionally, an accessory protein needed during the final step in the assembly of 30S ribosomal subunit, possibly for assembly of the head region. Essential for efficient processing of 16S rRNA. May be needed both before and after RbfA during the maturation of 16S rRNA. It has affinity for free ribosomal 30S subunits but not for 70S ribosomes. The polypeptide is Ribosome maturation factor RimM (Parabacteroides distasonis (strain ATCC 8503 / DSM 20701 / CIP 104284 / JCM 5825 / NCTC 11152)).